Here is a 295-residue protein sequence, read N- to C-terminus: Elongation factor Ts (295 aa).

Residues 79–82 (TDFV) are involved in Mg(2+) ion dislocation from EF-Tu.

Belongs to the EF-Ts family.

The protein resides in the cytoplasm. Functionally, associates with the EF-Tu.GDP complex and induces the exchange of GDP to GTP. It remains bound to the aminoacyl-tRNA.EF-Tu.GTP complex up to the GTP hydrolysis stage on the ribosome. This Bacillus cereus (strain G9842) protein is Elongation factor Ts.